The chain runs to 392 residues: S-adenosylmethionine synthase (392 aa).

An ATP-binding site is contributed by His20. Mg(2+) is bound at residue Asp22. Glu48 lines the K(+) pocket. L-methionine contacts are provided by Glu61 and Gln106. A flexible loop region spans residues 106 to 116 (QSRDIINAIEK). Residues 171 to 173 (DSK), Asp248, 254 to 255 (RK), Ala271, and Lys275 contribute to the ATP site. Asp248 is a binding site for L-methionine. Lys279 contacts L-methionine.

Belongs to the AdoMet synthase family. In terms of assembly, homotetramer; dimer of dimers. Mg(2+) serves as cofactor. It depends on K(+) as a cofactor.

The protein localises to the cytoplasm. It catalyses the reaction L-methionine + ATP + H2O = S-adenosyl-L-methionine + phosphate + diphosphate. It functions in the pathway amino-acid biosynthesis; S-adenosyl-L-methionine biosynthesis; S-adenosyl-L-methionine from L-methionine: step 1/1. Functionally, catalyzes the formation of S-adenosylmethionine (AdoMet) from methionine and ATP. The overall synthetic reaction is composed of two sequential steps, AdoMet formation and the subsequent tripolyphosphate hydrolysis which occurs prior to release of AdoMet from the enzyme. In Borreliella burgdorferi (strain ATCC 35210 / DSM 4680 / CIP 102532 / B31) (Borrelia burgdorferi), this protein is S-adenosylmethionine synthase.